The following is a 525-amino-acid chain: MAGRWTSLVDEAAAPWLPRGGLGSAIARHDFRRLRAVAAVSLTALPIVPLALTLALPVSAALPAGAALWASASLLAAAAAIAGGREFPTDGEVEFAPAPELPDLNAAYDLFAGLVTVHDTRGHVLSVHGRDASEYLKLMRDPHGRGFIEQIHVSDRIAFLRAIDSLRLDSERSAVDIRLERTSADGPQFAHIYCEMTPLRDAEGNLLAIVAQSRDVSEEARLQAEAAAKAAHAESANDAKTRFLAAVSHELRTPLNAILGFSDVLAGEYFGKLENDRQREYVSLIHQSGTHLLSVVNTMLDMSKIEAGRYELLLEPFRVAEAIAACEAMLSHQAREKGVRLTSRVTRSVGEINADQRAFQQILINLIGNAIKFTDRGGLVTVDAALEGNMLKLTVSDTGIGIAADKLQMLGQPFVQIQNDYTRRYEGTGLGLSLVKGLAELHGGDVSIRSAEGEGTVIVVTIPSDASGAAERQCADAPVTVEFPPRLKQHADGKREAGVPALSEALHTGEIGREGGHGAAQAKTA.

2 helical membrane passes run 36 to 56 (AVAA…TLAL) and 61 to 81 (ALPA…AAAI). Positions 173–228 (SAVDIRLERTSADGPQFAHIYCEMTPLRDAEGNLLAIVAQSRDVSEEARLQAEAAA) constitute a PAC domain. The Histidine kinase domain maps to 246–466 (AVSHELRTPL…VIVVTIPSDA (221 aa)). A Phosphohistidine; by autocatalysis modification is found at histidine 249. The tract at residues 506 to 525 (LHTGEIGREGGHGAAQAKTA) is disordered.

The protein resides in the cell membrane. The catalysed reaction is ATP + protein L-histidine = ADP + protein N-phospho-L-histidine.. This is an uncharacterized protein from Rhizobium meliloti (strain 1021) (Ensifer meliloti).